Consider the following 338-residue polypeptide: MSKPIVLSGVQPSGELSIGNYLGALRQWQQMQDDYDCQYCVVDLHAVTVRQDPKALHEATLDALAICLAVGVDPKKSTLFVQSHVPEHAQLGWLLNCYTQMGELSRMTQFKDKSARYANDVNVGLFDYPVLMAADILLYGAHQVPVGSDQKQHLELARDIATRFNNIYSPESPIFTVPEPYIPTVNARVMSLQDATKKMSKSDDNRKNVITLLEEPKSIIKKINKAQTDTETPPSIRHDVENKAGIANLMGLYSAATGMSFEEIEAKYKGVEMYGPFKKDVGEAVVAMLEPIQEEYRRIRADRAFMDEVMKQGAEKASARAAETLKKAYEAVGFVARP.

Residues 11 to 13 (QPS) and 19 to 20 (GN) contribute to the ATP site. The 'HIGH' region motif lies at 12–20 (PSGELSIGN). D135 contributes to the L-tryptophan binding site. ATP contacts are provided by residues 147 to 149 (GSD), V189, and 198 to 202 (KMSKS). The 'KMSKS' region motif lies at 198 to 202 (KMSKS).

It belongs to the class-I aminoacyl-tRNA synthetase family. As to quaternary structure, homodimer.

The protein resides in the cytoplasm. The catalysed reaction is tRNA(Trp) + L-tryptophan + ATP = L-tryptophyl-tRNA(Trp) + AMP + diphosphate + H(+). Its function is as follows. Catalyzes the attachment of tryptophan to tRNA(Trp). The chain is Tryptophan--tRNA ligase from Vibrio parahaemolyticus serotype O3:K6 (strain RIMD 2210633).